The sequence spans 167 residues: NADH-quinone oxidoreductase subunit B 2 (167 aa).

Positions 38, 39, 103, and 132 each coordinate [4Fe-4S] cluster.

This sequence belongs to the complex I 20 kDa subunit family. NDH-1 is composed of 14 different subunits. Subunits NuoB, C, D, E, F, and G constitute the peripheral sector of the complex. Requires [4Fe-4S] cluster as cofactor.

The protein localises to the cell inner membrane. The enzyme catalyses a quinone + NADH + 5 H(+)(in) = a quinol + NAD(+) + 4 H(+)(out). In terms of biological role, NDH-1 shuttles electrons from NADH, via FMN and iron-sulfur (Fe-S) centers, to quinones in the respiratory chain. The immediate electron acceptor for the enzyme in this species is believed to be ubiquinone. Couples the redox reaction to proton translocation (for every two electrons transferred, four hydrogen ions are translocated across the cytoplasmic membrane), and thus conserves the redox energy in a proton gradient. This is NADH-quinone oxidoreductase subunit B 2 from Rhizobium etli (strain CIAT 652).